A 472-amino-acid chain; its full sequence is Ribulose bisphosphate carboxylase large chain 1 (472 aa).

Residues N115 and T165 each contribute to the substrate site. Residue K167 is the Proton acceptor of the active site. Substrate is bound at residue K169. Residues K193, D195, and E196 each contribute to the Mg(2+) site. Position 193 is an N6-carboxylysine (K193). The active-site Proton acceptor is H286. 3 residues coordinate substrate: R287, H319, and S371.

Belongs to the RuBisCO large chain family. Type I subfamily. Heterohexadecamer of 8 large chains and 8 small chains. It depends on Mg(2+) as a cofactor.

It carries out the reaction 2 (2R)-3-phosphoglycerate + 2 H(+) = D-ribulose 1,5-bisphosphate + CO2 + H2O. The catalysed reaction is D-ribulose 1,5-bisphosphate + O2 = 2-phosphoglycolate + (2R)-3-phosphoglycerate + 2 H(+). Functionally, ruBisCO catalyzes two reactions: the carboxylation of D-ribulose 1,5-bisphosphate, the primary event in carbon dioxide fixation, as well as the oxidative fragmentation of the pentose substrate. Both reactions occur simultaneously and in competition at the same active site. The sequence is that of Ribulose bisphosphate carboxylase large chain 1 from Hydrogenovibrio marinus.